The following is a 361-amino-acid chain: Protein phosphatase 1 regulatory subunit 7 (361 aa).

The disordered stretch occupies residues 1–64; that stretch reads MAAERGAGQQ…RGAEDPEEEH (64 aa). N-acetylalanine is present on alanine 2. A phosphoserine mark is found at serine 12, serine 24, serine 27, serine 45, and serine 48. Positions 17–34 are enriched in basic and acidic residues; it reads EVDRRVESEESGDEEGKK. The span at 48 to 58 shows a compositional bias: basic and acidic residues; it reads SLKDGVDRGAE. LRR repeat units lie at residues 78–99, 100–121, 122–143, 144–165, 166–187, 188–209, 210–231, 232–253, 254–275, 276–297, and 298–319; these read DAED…EVLK, KVKS…EELQ, SLRE…EALT, ELEV…DKLT, QLKK…SNLH, QLQM…DTLT, NLES…DALT, NLTV…QSLV, NLRE…ENNN, KLTM…SHLT, and ELQE…DELK. Serine 323 carries the post-translational modification Phosphoserine. Residues 332-361 form the LRRCT domain; the sequence is NPLQKDPQYRRKVMLALPSVRQIDATYVRF.

This sequence belongs to the SDS22 family. In terms of assembly, interacts with PPP1CA, PPP1CB and PPP1CC/PPP1G. In terms of tissue distribution, widely expressed with high level in testis. Expression increases during puberty. Expressed in spermatids and probably also in spermatozoa.

The protein localises to the nucleus. Its function is as follows. Regulatory subunit of protein phosphatase 1. The sequence is that of Protein phosphatase 1 regulatory subunit 7 (Ppp1r7) from Mus musculus (Mouse).